Here is a 245-residue protein sequence, read N- to C-terminus: Syntaxin-61 (245 aa).

At 1-224 the chain is on the cytoplasmic side; sequence MSSAQDPFYI…VMKKAGAKGQ (224 aa). Residues 153–215 enclose the t-SNARE coiled-coil homology domain; it reads MLLIKQQDEE…EFVQKKVGMV (63 aa). A helical; Anchor for type IV membrane protein transmembrane segment spans residues 225–245; that stretch reads MMMICFLLVLFIILFVLVFLT.

It belongs to the syntaxin family. As to quaternary structure, interacts with VTI12 and either SYP41, SYP42 or SYP51 in the trans-Golgi network or with VTI11 and SYP51 in the prevacuolar compartment to form t-SNARE complexes. Core constituent of the SNARE complex required for membrane fusion at the trans-Golgi network. Also observed in the SYP121-complex and cellulose synthases. Colocalizes with PIP2-7 and SYP121 in trafficking vesicles and at the plasma membrane. Interacts with SYP121 and PIP2-7. In terms of tissue distribution, expressed in root, leaf, stem, flower and silique, but not in hypocotyl or young leaf. Strong expression in the vasculature and in guard cells of the leaf epidermis.

The protein localises to the golgi apparatus. It is found in the trans-Golgi network membrane. It localises to the prevacuolar compartment membrane. Vesicle trafficking protein that functions in the secretory pathway; the fusion of phospholipid vesicles containing SYP61 and VTI12 is triggered by YKT61 and YKT62. Together with VTI12, required for membrane fusion. Involved in osmotic stress tolerance and in abscisic acid (ABA) regulation of stomatal responses. Plays a role in the exocytic trafficking of cellulose synthases (CESAs) and the transport of cell wall components to the plasma membrane. Together with SYP121, regulates the post-Golgi trafficking of the aquaporin PIP2-7 to the plasma membrane, thus modulating cell membrane water permeability. This chain is Syntaxin-61, found in Arabidopsis thaliana (Mouse-ear cress).